A 102-amino-acid polypeptide reads, in one-letter code: Small ribosomal subunit protein uS10 (102 aa).

Belongs to the universal ribosomal protein uS10 family. Part of the 30S ribosomal subunit.

Its function is as follows. Involved in the binding of tRNA to the ribosomes. The chain is Small ribosomal subunit protein uS10 from Streptococcus pneumoniae (strain CGSP14).